The primary structure comprises 340 residues: Uroporphyrinogen decarboxylase (340 aa).

Substrate-binding positions include 21 to 25 (RQAGR), aspartate 71, tyrosine 148, serine 203, and histidine 316.

This sequence belongs to the uroporphyrinogen decarboxylase family. As to quaternary structure, homodimer.

It is found in the cytoplasm. It carries out the reaction uroporphyrinogen III + 4 H(+) = coproporphyrinogen III + 4 CO2. It participates in porphyrin-containing compound metabolism; protoporphyrin-IX biosynthesis; coproporphyrinogen-III from 5-aminolevulinate: step 4/4. Its function is as follows. Catalyzes the decarboxylation of four acetate groups of uroporphyrinogen-III to yield coproporphyrinogen-III. This is Uroporphyrinogen decarboxylase from Campylobacter jejuni (strain RM1221).